Here is a 198-residue protein sequence, read N- to C-terminus: Pyridoxal 5'-phosphate synthase subunit PdxT (198 aa).

L-glutamine is bound at residue 52–54; the sequence is GES. Catalysis depends on Cys84, which acts as the Nucleophile. L-glutamine is bound by residues Arg116 and 143 to 144; that span reads IR. Catalysis depends on charge relay system residues His179 and Glu181.

The protein belongs to the glutaminase PdxT/SNO family. As to quaternary structure, in the presence of PdxS, forms a dodecamer of heterodimers. Only shows activity in the heterodimer.

The enzyme catalyses aldehydo-D-ribose 5-phosphate + D-glyceraldehyde 3-phosphate + L-glutamine = pyridoxal 5'-phosphate + L-glutamate + phosphate + 3 H2O + H(+). It catalyses the reaction L-glutamine + H2O = L-glutamate + NH4(+). It functions in the pathway cofactor biosynthesis; pyridoxal 5'-phosphate biosynthesis. Its function is as follows. Catalyzes the hydrolysis of glutamine to glutamate and ammonia as part of the biosynthesis of pyridoxal 5'-phosphate. The resulting ammonia molecule is channeled to the active site of PdxS. This chain is Pyridoxal 5'-phosphate synthase subunit PdxT, found in Caldivirga maquilingensis (strain ATCC 700844 / DSM 13496 / JCM 10307 / IC-167).